A 271-amino-acid polypeptide reads, in one-letter code: Co-chaperone protein DjlA (271 aa).

Residues 1 to 6 (MQYWGK) are Periplasmic-facing. A helical transmembrane segment spans residues 7 to 31 (IIGVAVALLMGGGFWGVVLGLLIGH). Over 32-271 (MFDKARSRKM…ELIKQQKGFK (240 aa)) the chain is Cytoplasmic. The region spanning 205-271 (DACNVLGVKP…ELIKQQKGFK (67 aa)) is the J domain.

In terms of assembly, homodimer.

The protein localises to the cell inner membrane. In terms of biological role, regulatory DnaK co-chaperone. Direct interaction between DnaK and DjlA is needed for the induction of the wcaABCDE operon, involved in the synthesis of a colanic acid polysaccharide capsule, possibly through activation of the RcsB/RcsC phosphotransfer signaling pathway. The colanic acid capsule may help the bacterium survive conditions outside the host. The sequence is that of Co-chaperone protein DjlA from Escherichia coli O157:H7.